Reading from the N-terminus, the 990-residue chain is Pentatricopeptide repeat-containing protein At4g33170 (990 aa).

20 PPR repeats span residues 73–107 (ERFLINNLISMYSKCGSLTYARRVFDKMPDRDLVS), 109–139 (NSILAAYAQSSECVVENIQQAFLLFRILRQD), 144–178 (SRMTLSPMLKLCLHSGYVWASESFHGYACKIGLDG), 179–209 (DEFVAGALVNIYLKFGKVKEGKVLFEEMPYR), 210–244 (DVVLWNLMLKAYLEMGFKEEAIDLSSAFHSSGLNP), 279–313 (EIIFRNKGLSEYLHSGQYSALLKCFADMVESDVEC), 314–348 (DQVTFILMLATAVKVDSLALGQQVHCMALKLGLDL), 349–379 (MLTVSNSLINMYCKLRKFGFARTVFDNMSER), 380–414 (DLISWNSVIAGIAQNGLEVEAVCLFMQLLRCGLKP), 415–450 (DQYTMTSVLKAASSLPEGLSLSKQVHVHAIKINNVS), 451–477 (DSFVSTALIDAYSRNRCMKEAEILFER), 481–515 (DLVAWNAMMAGYTQSHDGHKTLKLFALMHKQGERS), 516–550 (DDFTLATVFKTCGFLFAINQGKQVHAYAIKSGYDL), 551–581 (DLWVSSGILDMYVKCGDMSAAQFAFDSIPVP), 582–616 (DDVAWTTMISGCIENGEEERAFHVFSQMRLMGVLP), 617–651 (DEFTIATLAKASSCLTALEQGRQIHANALKLNCTN), 652–682 (DPFVGTSLVDMYAKCGSIDDAYCLFKRIEMM), 683–717 (NITAWNAMLVGLAQHGEGKETLQLFKQMKSLGIKP), 718–753 (DKVTFIGVLSACSHSGLVSEAYKHMRSMHGDYGIKP), and 754–788 (EIEHYSCLADALGRAGLVKQAENLIESMSMEASAS). The segment at 789-864 (MYRTLLAACR…DPGFSWIEVK (76 aa)) is type E motif. The type E(+) motif stretch occupies residues 865 to 895 (NKIHIFVVDDRSNRQTELIYRKVKDMIRDIK). The tract at residues 896 to 990 (QEGYVPETDF…DGICSCGDYW (95 aa)) is type DYW motif.

This sequence belongs to the PPR family. PCMP-H subfamily.

The protein is Pentatricopeptide repeat-containing protein At4g33170 (PCMP-H53) of Arabidopsis thaliana (Mouse-ear cress).